We begin with the raw amino-acid sequence, 335 residues long: Zinc finger protein 396 (335 aa).

The region spanning 52–134 (RQQFRQFGYQ…TMLEDVEREL (83 aa)) is the SCAN box domain. 3 C2H2-type zinc fingers span residues 251-273 (QKCDECGKIFSQSSALILHQRIH), 279-301 (YACDECAKAFSRSAILIQHRRTH), and 307-329 (YKCHDCGKAFSQSSNLFRHRKRH).

This sequence belongs to the krueppel C2H2-type zinc-finger protein family. Isoforms 1 and 2 can both homo- and hetero-associate. As to expression, expressed strongly in liver, moderately in skeletal muscle and weakly in kidney, pancreas, spleen and prostate.

The protein resides in the nucleus. The protein localises to the cytoplasm. Its function is as follows. Isoform 1 and isoform 2 act as DNA-dependent transcriptional repressors. The sequence is that of Zinc finger protein 396 (ZNF396) from Homo sapiens (Human).